The chain runs to 637 residues: Chaperone protein HtpG (637 aa).

The segment at 1-345 (MSQQETHGFQ…SNDLPLNVSR (345 aa)) is a; substrate-binding. The b stretch occupies residues 346-562 (EILQDNHITK…EGEMSSQMIK (217 aa)). Positions 563–637 (LMQAAGQPVP…MNQMLLANLK (75 aa)) are c.

Belongs to the heat shock protein 90 family. As to quaternary structure, homodimer.

Its subcellular location is the cytoplasm. Functionally, molecular chaperone. Has ATPase activity. The polypeptide is Chaperone protein HtpG (Shewanella sp. (strain ANA-3)).